A 273-amino-acid chain; its full sequence is Soluble P-type ATPase-like phosphatase (273 aa).

The active-site 4-aspartylphosphate intermediate is the D8.

Belongs to the cation transport ATPase (P-type) (TC 3.A.3) family. Type IB subfamily. Mg(2+) serves as cofactor.

Its activity is regulated as follows. Inhibited by orthovanadate. Its function is as follows. Most probably acts as a phosphatase in the cytosol. The sequence is that of Soluble P-type ATPase-like phosphatase (patS) from Methanocaldococcus jannaschii (strain ATCC 43067 / DSM 2661 / JAL-1 / JCM 10045 / NBRC 100440) (Methanococcus jannaschii).